The chain runs to 796 residues: Striatin-3 (796 aa).

At Met1 the chain carries N-acetylmethionine. The segment covering 1–13 (MDELAGGGGGGQG) has biased composition (gly residues). A disordered region spans residues 1 to 60 (MDELAGGGGGGQGMAAPPRPQQGPGGNLSLPPGANGAPGGGGPPAAEAAGPPAGPELSRP). The caveolin-binding stretch occupies residues 71–79 (YIQHEWARF). The stretch at 77–136 (ARFEMERAHWEVERAELQARIAFLQGERKGQENLKKDLVRRIKMLEYALKQERAKYHKLK) forms a coiled coil. Residue Thr150 is modified to Phosphothreonine. The tract at residues 166–183 (QNSQLTWKQGRQLLRQYL) is calmodulin-binding. Residues Ser202, Ser214, Ser229, Ser257, and Ser334 each carry the phosphoserine modification. Disordered regions lie at residues 252–271 (ENAD…IPEG) and 311–335 (EDGE…DLSP). Acidic residues predominate over residues 253 to 264 (NADDSDEEENDM). WD repeat units follow at residues 477–516 (SHFD…PAKK), 530–569 (AHIG…VDPY), 583–622 (AHTD…PCVC), 678–717 (QSSN…MIHS), 720–759 (AHLD…CVQE), and 766–795 (KLDE…AKVF).

Belongs to the WD repeat striatin family. Tetramerizes. Part of the core of STRIPAK complexes composed of PP2A catalytic and scaffolding subunits, the striatins (PP2A regulatory subunits), the striatin-associated proteins MOB4, STRIP1 and STRIP2, PDCD10 and members of the STE20 kinases, such as STK24 and STK26. The STRIPAK complex can be extended by adapter proteins such as SLMAP:SIKE1 or CTTNBP2NL. Interacts with CDC42BPB. Mainly expressed in the brain and muscles but is also detected at low levels in various tissues such as kidney, spleen and lung.

The protein localises to the cytoplasm. The protein resides in the membrane. In terms of biological role, calmodulin-binding scaffolding protein which is the center of the striatin-interacting phosphatase and kinase (STRIPAK) complexes. STRIPAK complexes have critical roles in protein (de)phosphorylation and are regulators of multiple signaling pathways including Hippo, MAPK, nuclear receptor and cytoskeleton remodeling. Different types of STRIPAK complexes are involved in a variety of biological processes such as cell growth, differentiation, apoptosis, metabolism and immune regulation. This is Striatin-3 (Strn3) from Mus musculus (Mouse).